The chain runs to 320 residues: Malate dehydrogenase (320 aa).

Residues 10–15 (GAGQIG) and Asp-34 contribute to the NAD(+) site. Substrate contacts are provided by Arg-83 and Arg-89. NAD(+) is bound by residues Asn-96 and 119–121 (ITN). Substrate contacts are provided by Asn-121 and Arg-152. Residue His-176 is the Proton acceptor of the active site.

Belongs to the LDH/MDH superfamily. MDH type 3 family.

The catalysed reaction is (S)-malate + NAD(+) = oxaloacetate + NADH + H(+). Functionally, catalyzes the reversible oxidation of malate to oxaloacetate. This Methylorubrum populi (strain ATCC BAA-705 / NCIMB 13946 / BJ001) (Methylobacterium populi) protein is Malate dehydrogenase.